Consider the following 404-residue polypeptide: DNA replication and repair protein RecF (404 aa).

G30–T37 provides a ligand contact to ATP.

This sequence belongs to the RecF family.

It is found in the cytoplasm. Its function is as follows. The RecF protein is involved in DNA metabolism; it is required for DNA replication and normal SOS inducibility. RecF binds preferentially to single-stranded, linear DNA. It also seems to bind ATP. The chain is DNA replication and repair protein RecF from Clavibacter michiganensis subsp. michiganensis (strain NCPPB 382).